We begin with the raw amino-acid sequence, 185 residues long: Large ribosomal subunit protein uL5 (185 aa).

It belongs to the universal ribosomal protein uL5 family. As to quaternary structure, part of the 50S ribosomal subunit; part of the 5S rRNA/L5/L18/L25 subcomplex. Contacts the 5S rRNA and the P site tRNA. Forms a bridge to the 30S subunit in the 70S ribosome.

In terms of biological role, this is one of the proteins that bind and probably mediate the attachment of the 5S RNA into the large ribosomal subunit, where it forms part of the central protuberance. In the 70S ribosome it contacts protein S13 of the 30S subunit (bridge B1b), connecting the 2 subunits; this bridge is implicated in subunit movement. Contacts the P site tRNA; the 5S rRNA and some of its associated proteins might help stabilize positioning of ribosome-bound tRNAs. The protein is Large ribosomal subunit protein uL5 of Protochlamydia amoebophila (strain UWE25).